The primary structure comprises 499 residues: Glutamyl-tRNA(Gln) amidotransferase subunit A, mitochondrial (499 aa).

Catalysis depends on charge relay system residues Lys61 and Ser139. Ser163 functions as the Acyl-ester intermediate in the catalytic mechanism.

The protein belongs to the amidase family. GatA subfamily. In terms of assembly, subunit of the heterotrimeric GatCAB amidotransferase (AdT) complex, composed of A, B and C subunits.

Its subcellular location is the mitochondrion. The enzyme catalyses L-glutamyl-tRNA(Gln) + L-glutamine + ATP + H2O = L-glutaminyl-tRNA(Gln) + L-glutamate + ADP + phosphate + H(+). In terms of biological role, allows the formation of correctly charged Gln-tRNA(Gln) through the transamidation of misacylated Glu-tRNA(Gln) in the mitochondria. The reaction takes place in the presence of glutamine and ATP through an activated gamma-phospho-Glu-tRNA(Gln). The protein is Glutamyl-tRNA(Gln) amidotransferase subunit A, mitochondrial of Coccidioides posadasii (strain C735) (Valley fever fungus).